Here is a 651-residue protein sequence, read N- to C-terminus: Acetyl-coenzyme A synthetase (651 aa).

CoA contacts are provided by residues 189-192 (RGGK), T311, and N335. Residues 387–389 (GEP), 411–416 (DTWWQT), D500, and R515 contribute to the ATP site. S523 is a binding site for CoA. Residue R526 participates in ATP binding. Residues V537, H539, and V542 each contribute to the Mg(2+) site. R586 contributes to the CoA binding site. Residue K611 is modified to N6-acetyllysine.

Belongs to the ATP-dependent AMP-binding enzyme family. Mg(2+) is required as a cofactor. In terms of processing, acetylated. Deacetylation by the SIR2-homolog deacetylase activates the enzyme.

It catalyses the reaction acetate + ATP + CoA = acetyl-CoA + AMP + diphosphate. Its function is as follows. Catalyzes the conversion of acetate into acetyl-CoA (AcCoA), an essential intermediate at the junction of anabolic and catabolic pathways. AcsA undergoes a two-step reaction. In the first half reaction, AcsA combines acetate with ATP to form acetyl-adenylate (AcAMP) intermediate. In the second half reaction, it can then transfer the acetyl group from AcAMP to the sulfhydryl group of CoA, forming the product AcCoA. The protein is Acetyl-coenzyme A synthetase of Brucella suis (strain ATCC 23445 / NCTC 10510).